Consider the following 287-residue polypeptide: Bifunctional protein FolD (287 aa).

Residues 166 to 168 (GAS) and Ile232 each bind NADP(+).

It belongs to the tetrahydrofolate dehydrogenase/cyclohydrolase family. In terms of assembly, homodimer.

The enzyme catalyses (6R)-5,10-methylene-5,6,7,8-tetrahydrofolate + NADP(+) = (6R)-5,10-methenyltetrahydrofolate + NADPH. The catalysed reaction is (6R)-5,10-methenyltetrahydrofolate + H2O = (6R)-10-formyltetrahydrofolate + H(+). The protein operates within one-carbon metabolism; tetrahydrofolate interconversion. Catalyzes the oxidation of 5,10-methylenetetrahydrofolate to 5,10-methenyltetrahydrofolate and then the hydrolysis of 5,10-methenyltetrahydrofolate to 10-formyltetrahydrofolate. This chain is Bifunctional protein FolD, found in Aeromonas salmonicida (strain A449).